Reading from the N-terminus, the 341-residue chain is Phosphoribosylformylglycinamidine cyclo-ligase (341 aa).

It belongs to the AIR synthase family.

The protein resides in the cytoplasm. It carries out the reaction 2-formamido-N(1)-(5-O-phospho-beta-D-ribosyl)acetamidine + ATP = 5-amino-1-(5-phospho-beta-D-ribosyl)imidazole + ADP + phosphate + H(+). The protein operates within purine metabolism; IMP biosynthesis via de novo pathway; 5-amino-1-(5-phospho-D-ribosyl)imidazole from N(2)-formyl-N(1)-(5-phospho-D-ribosyl)glycinamide: step 2/2. The chain is Phosphoribosylformylglycinamidine cyclo-ligase from Caldicellulosiruptor bescii (strain ATCC BAA-1888 / DSM 6725 / KCTC 15123 / Z-1320) (Anaerocellum thermophilum).